We begin with the raw amino-acid sequence, 248 residues long: Protein maestro (248 aa).

Residues M1–P20 are disordered. HEAT repeat units lie at residues E44–A79 and S128–A163.

The protein resides in the nucleus. It localises to the nucleolus. This chain is Protein maestro (MRO), found in Macaca fascicularis (Crab-eating macaque).